The sequence spans 144 residues: Large ribosomal subunit protein uL11 (144 aa).

It belongs to the universal ribosomal protein uL11 family. As to quaternary structure, part of the ribosomal stalk of the 50S ribosomal subunit. Interacts with L10 and the large rRNA to form the base of the stalk. L10 forms an elongated spine to which L12 dimers bind in a sequential fashion forming a multimeric L10(L12)X complex. One or more lysine residues are methylated.

Functionally, forms part of the ribosomal stalk which helps the ribosome interact with GTP-bound translation factors. This is Large ribosomal subunit protein uL11 from Granulibacter bethesdensis (strain ATCC BAA-1260 / CGDNIH1).